Reading from the N-terminus, the 222-residue chain is Glutathione S-transferase A3 (222 aa).

Alanine 2 bears the N-acetylalanine mark. The region spanning 3–83 (GKPKLHYFNG…YIASKYNLYG (81 aa)) is the GST N-terminal domain. N6-succinyllysine is present on lysine 4. Glutathione-binding positions include tyrosine 9, arginine 45, 54-55 (QV), and 67-68 (QT). The GST C-terminal domain occupies 85–207 (DIKERALIDM…LQPGSPRKPP (123 aa)).

Belongs to the GST superfamily. Alpha family. In terms of assembly, homodimer.

Its subcellular location is the cytoplasm. The catalysed reaction is RX + glutathione = an S-substituted glutathione + a halide anion + H(+). It carries out the reaction androst-5-ene-3,17-dione = androst-4-ene-3,17-dione. It catalyses the reaction pregn-5-ene-3,20-dione = progesterone. Functionally, conjugation of reduced glutathione to a wide number of exogenous and endogenous hydrophobic electrophiles. Catalyzes isomerization reactions that contribute to the biosynthesis of steroid hormones. Efficiently catalyze obligatory double-bond isomerizations of delta(5)-androstene-3,17-dione and delta(5)-pregnene-3,20-dione, precursors to testosterone and progesterone, respectively. Has substantial activity toward aflatoxin B1-8,9-epoxide. The protein is Glutathione S-transferase A3 of Homo sapiens (Human).